Reading from the N-terminus, the 538-residue chain is Eukaryotic translation initiation factor 3 subunit L (538 aa).

The region spanning 305-513 (TFSDILLYIQ…IHIADTKVSH (209 aa)) is the PCI domain.

This sequence belongs to the eIF-3 subunit L family. In terms of assembly, component of the eukaryotic translation initiation factor 3 (eIF-3) complex. The eIF-3 complex interacts with pix.

It localises to the cytoplasm. In terms of biological role, component of the eukaryotic translation initiation factor 3 (eIF-3) complex, which is involved in protein synthesis of a specialized repertoire of mRNAs and, together with other initiation factors, stimulates binding of mRNA and methionyl-tRNAi to the 40S ribosome. The eIF-3 complex specifically targets and initiates translation of a subset of mRNAs involved in cell proliferation. The protein is Eukaryotic translation initiation factor 3 subunit L of Drosophila virilis (Fruit fly).